We begin with the raw amino-acid sequence, 243 residues long: MKHDLETLKHIIDSSNRITFFTGAGVSVASGVPDFRSMGGLFDEISKDGLSPEYLLSRDYLEDDPEGFINFCHKRLLFVDTMPNIVHDWIAKLERNQQSLGVITQNIDGLHSDAGSQHVDELHGTLNRFYCNVCHKSYTKSDVIDRTLKHCDNCGGAIRPDIVLYGEMLDQPTIIRALNKIEHADTLVVLGSSLVVQPAAGLISHFKGDNLIIINKDRTPYDSDATLVIHDDMVSVVKSLMTE.

The 243-residue stretch at 1 to 243 (MKHDLETLKH…VSVVKSLMTE (243 aa)) folds into the Deacetylase sirtuin-type domain. 7 residues coordinate NAD(+): A24, F35, R36, Q105, I107, D108, and H123. F35 is a binding site for nicotinamide. Nicotinamide contacts are provided by I107 and D108. H123 functions as the Proton acceptor in the catalytic mechanism. Positions 131, 134, 151, and 154 each coordinate Zn(2+). 4 residues coordinate NAD(+): S192, S193, N215, and D232.

This sequence belongs to the sirtuin family. Class U subfamily. It depends on Zn(2+) as a cofactor.

The protein resides in the cytoplasm. It catalyses the reaction N(6)-acetyl-L-lysyl-[protein] + NAD(+) + H2O = 2''-O-acetyl-ADP-D-ribose + nicotinamide + L-lysyl-[protein]. Its function is as follows. NAD-dependent protein deacetylase which modulates the activities of several enzymes which are inactive in their acetylated form. This chain is NAD-dependent protein deacetylase, found in Staphylococcus aureus (strain NCTC 8325 / PS 47).